The primary structure comprises 191 residues: uncharacterized protein (191 aa).

The protein to E.coli YecM.

This is an uncharacterized protein from Haemophilus influenzae (strain ATCC 51907 / DSM 11121 / KW20 / Rd).